A 248-amino-acid polypeptide reads, in one-letter code: 5'-nucleotidase SurE (248 aa).

A divalent metal cation is bound by residues D8, D9, S39, and N91.

It belongs to the SurE nucleotidase family. A divalent metal cation serves as cofactor.

Its subcellular location is the cytoplasm. The enzyme catalyses a ribonucleoside 5'-phosphate + H2O = a ribonucleoside + phosphate. Nucleotidase that shows phosphatase activity on nucleoside 5'-monophosphates. The chain is 5'-nucleotidase SurE from Neisseria meningitidis serogroup C / serotype 2a (strain ATCC 700532 / DSM 15464 / FAM18).